The primary structure comprises 366 residues: Lysophosphatidic acid receptor 1-A (366 aa).

The Extracellular segment spans residues 1 to 52; the sequence is MASLSEFVSEPISMMSQTSAASESQCYYNETIAFFYNRSGKYLATEWNAVSK. Cystine bridges form between Cys26–Cys192 and Cys190–Cys197. Residues Asn29 and Asn37 are each glycosylated (N-linked (GlcNAc...) asparagine). Lys41 lines the a 1-acyl-sn-glycero-3-phosphate pocket. A helical transmembrane segment spans residues 53–77; the sequence is LVMGLGITVCIFIMLANLLVMVAIY. The Cytoplasmic portion of the chain corresponds to 78–85; sequence VNRRFHFP. A helical transmembrane segment spans residues 86–109; the sequence is IYYLMANLAAADFFAGLAYFYLMF. The Extracellular segment spans residues 110–123; that stretch reads NTGPNTRRLTVSTW. The helical transmembrane segment at 124–146 threads the bilayer; sequence LLRQGLIDTSLTASVANLLAIAI. 126-131 contributes to the a 1-acyl-sn-glycero-3-phosphate binding site; it reads RQGLID. At 147-165 the chain is on the cytoplasmic side; the sequence is ERHITVFRMQLHTRMSNRR. The helical transmembrane segment at 166-186 threads the bilayer; that stretch reads VVVVIVVIWTVAIVMGAIPSV. Residues 187–206 are Extracellular-facing; sequence GWNCICDLEQCSNMAPLYSD. A helical membrane pass occupies residues 207–227; it reads SYLIFWTIFNLVTFVVMVVLY. Residue Trp212 coordinates a 1-acyl-sn-glycero-3-phosphate. The Cytoplasmic segment spans residues 228–257; it reads AHIFVYVRQKTMRMSRHSSGPRRNRDTMMS. Residues 258–282 form a helical membrane-spanning segment; that stretch reads LLKTVVIVLGAFIVCWTPGLVLLLL. The Extracellular portion of the chain corresponds to 283–296; that stretch reads DICCPQCNILAYEK. An intrachain disulfide couples Cys286 to Cys289. Residues 297–317 traverse the membrane as a helical segment; the sequence is FFLLLAEFNSAMNPIIYSYRD. At 318–366 the chain is on the cytoplasmic side; sequence KEMSATFKQILCCQRTENVNGPTEGSDRSASSLNHTILAGVHSNDHSVV.

Belongs to the G-protein coupled receptor 1 family. In terms of tissue distribution, expressed at high levels in oocytes and at lower levels in brain and spinal cord. Below detection level in lung, heart, kidney, liver, muscle, stomach, and intestine.

It is found in the cell surface. It localises to the cell membrane. The protein resides in the endosome. Functionally, receptor for lysophosphatidic acid (LPA). Plays a role in the reorganization of the actin cytoskeleton, cell migration, differentiation and proliferation, and thereby contributes to the responses to tissue damage and infectious agents. Activates downstream signaling cascades via the G(i)/G(o), G(12)/G(13), and G(q) families of heteromeric G proteins. Signaling inhibits adenylyl cyclase activity and decreases cellular cAMP levels. Signaling triggers an increase of cytoplasmic Ca(2+) levels. Signaling leads to the activation of phospholipase C (PLC) and the formation of inositol 1,4,5-trisphosphate. Signaling mediates activation of down-stream MAP kinases. Contributes to the regulation of cell shape. Promotes Rho-dependent reorganization of the actin cytoskeleton in neuronal cells and neurite retraction. Promotes the activation of Rho and the formation of actin stress fibers. Promotes formation of lamellipodia at the leading edge of migrating cells via activation of Rac. Through its function as lysophosphatidic acid receptor, plays a role in chemotaxis and cell migration, including responses to injury and wounding. Promotes cell proliferation in response to lysophosphatidic acid. This chain is Lysophosphatidic acid receptor 1-A (lpar1-a), found in Xenopus laevis (African clawed frog).